Consider the following 217-residue polypeptide: Replication-associated protein A (217 aa).

The segment covering 1 to 17 (MRAPASSAASNRPGPSN) has biased composition (low complexity). The segment at 1–22 (MRAPASSAASNRPGPSNHPTPR) is disordered. One can recognise a CRESS-DNA virus Rep endonuclease domain in the interval 22–125 (RWNSKQFFLT…NGDSDEMGEL (104 aa)). The short motif at 29–32 (FLTY) is the RCR-1 element. A divalent metal cation contacts are provided by Glu63, His71, and His73. The RCR-2 motif lies at 71–73 (HLH). The active-site For DNA cleavage activity is the Tyr111. An RCR-3 motif is present at residues 111-114 (YISK). The oligomerization stretch occupies residues 176 to 188 (SAAALFTEPPPVY).

The protein belongs to the geminiviridae Rep protein family. As to quaternary structure, homooligomer. Part of the C- and V-complexes which are RepA-Rep-DNA complexes involved in the c-sense and v-sense transcription.

The protein resides in the host nucleus. The protein localises to the host cytoplasm. In terms of biological role, implicated in enhancement of V-sense gene expression. Acts a an inhibitor of C-sense gene transcription. This Miscanthus sacchariflorus (MiSV) protein is Replication-associated protein A.